The following is a 423-amino-acid chain: D-tagatose-1,6-bisphosphate aldolase subunit GatZ (423 aa).

Belongs to the GatZ/KbaZ family. GatZ subfamily. In terms of assembly, forms a complex with GatY.

It functions in the pathway carbohydrate metabolism; D-tagatose 6-phosphate degradation; D-glyceraldehyde 3-phosphate and glycerone phosphate from D-tagatose 6-phosphate: step 2/2. In terms of biological role, component of the tagatose-1,6-bisphosphate aldolase GatYZ that is required for full activity and stability of the Y subunit. Could have a chaperone-like function for the proper and stable folding of GatY. When expressed alone, GatZ does not show any aldolase activity. Is involved in the catabolism of galactitol. This chain is D-tagatose-1,6-bisphosphate aldolase subunit GatZ, found in Salmonella choleraesuis (strain SC-B67).